Here is a 327-residue protein sequence, read N- to C-terminus: Vacuolar protein sorting-associated protein 26A (327 aa).

A disordered region spans residues 305-327; it reads RNFHQRYESPEPRPSLSAEQPEM.

Belongs to the VPS26 family. In terms of assembly, component of the heterotrimeric retromer cargo-selective complex (CSC) which is believed to associate with variable sorting nexins to form functionally distinct retromer complex variants.

The protein resides in the cytoplasm. It is found in the endosome membrane. Its subcellular location is the early endosome. Acts as a component of the retromer cargo-selective complex (CSC). The CSC is believed to be the core functional component of retromer or respective retromer complex variants acting to prevent missorting of selected transmembrane cargo proteins into the lysosomal degradation pathway. Retromer mediates retrograde transport of cargo proteins from endosomes to the trans-Golgi network (TGN). This is Vacuolar protein sorting-associated protein 26A (vps26a) from Danio rerio (Zebrafish).